The primary structure comprises 480 residues: ATP synthase subunit beta (480 aa).

Residue Gly166–Thr173 coordinates ATP.

The protein belongs to the ATPase alpha/beta chains family. In terms of assembly, F-type ATPases have 2 components, CF(1) - the catalytic core - and CF(0) - the membrane proton channel. CF(1) has five subunits: alpha(3), beta(3), gamma(1), delta(1), epsilon(1). CF(0) has three main subunits: a(1), b(2) and c(9-12). The alpha and beta chains form an alternating ring which encloses part of the gamma chain. CF(1) is attached to CF(0) by a central stalk formed by the gamma and epsilon chains, while a peripheral stalk is formed by the delta and b chains.

The protein resides in the cell membrane. The enzyme catalyses ATP + H2O + 4 H(+)(in) = ADP + phosphate + 5 H(+)(out). Functionally, produces ATP from ADP in the presence of a proton gradient across the membrane. The catalytic sites are hosted primarily by the beta subunits. The sequence is that of ATP synthase subunit beta from Streptomyces griseus subsp. griseus (strain JCM 4626 / CBS 651.72 / NBRC 13350 / KCC S-0626 / ISP 5235).